We begin with the raw amino-acid sequence, 527 residues long: Acid-sensing ion channel 1 (527 aa).

The Cytoplasmic segment spans residues 1 to 49 (MMDLKVDEEEVDSGQPVSIQAFASSSTLHGISHIFSYERLSLKRVVWAL). A helical membrane pass occupies residues 50-71 (CFMGSLALLALVCTNRIQYYFL). Over 72 to 424 (YPHVTKLDEV…NYETIEQKKA (353 aa)) the chain is Extracellular. Disulfide bonds link C94-C195, C173-C180, C291-C366, C309-C362, C313-C360, C322-C344, and C324-C336. 2 N-linked (GlcNAc...) asparagine glycosylation sites follow: N367 and N394. A discontinuously helical transmembrane segment spans residues 425 to 454 (YEVAGLLGDIGGQMGLFIGASILTVLELFD). The GAS motif; ion selectivity filter motif lies at 443 to 445 (GAS). The Cytoplasmic segment spans residues 455–527 (YAYEVIKHRL…ARGTFEDFTC (73 aa)).

It belongs to the amiloride-sensitive sodium channel (TC 1.A.6) family. ASIC1 subfamily. Homotrimer. Heterotrimer; with other ASIC proteins producing channel with different properties.

The protein localises to the cell membrane. Its subcellular location is the postsynaptic cell membrane. It localises to the cell projection. It is found in the dendrite. The catalysed reaction is Na(+)(in) = Na(+)(out). It carries out the reaction Li(+)(in) = Li(+)(out). The enzyme catalyses K(+)(in) = K(+)(out). It catalyses the reaction Ca(2+)(in) = Ca(2+)(out). Inhibited by the diuretic drug amiloride. Inhibited by Cs(1+) ions. Inhibited by the spider venom psalmotoxin-1; this locks the channel into its desensitized conformation. Channel activity is increased by the heterodimeric snake venom neurotoxin composed of MitTx-alpha and MitTx-beta; this slows channel closure and increases the magnitude of the steady-state current that is triggered by low pH. In terms of biological role, forms voltage-independent, pH-gated trimeric sodium channels that act as postsynaptic excitatory receptors in the nervous system, playing a crucial role in regulating synaptic plasticity, learning, and memory. Upon extracellular pH drop this channel elicits transient, fast activating, and completely desensitizing inward currents. Displays high selectivity for sodium ions but can also permit the permeation of other cations. Regulates more or less directly intracellular calcium concentration and CaMKII phosphorylation, and thereby the density of dendritic spines. Modulates neuronal activity in the circuits underlying innate fear. The chain is Acid-sensing ion channel 1 from Gallus gallus (Chicken).